Reading from the N-terminus, the 356-residue chain is Protein ATP1B4 (356 aa).

The Nuclear portion of the chain corresponds to 1–109 (MRRQLRSRRA…SLARTGQSRS (109 aa)). Residues 32-77 (LADEEEEAEEEAQVMMVPGLEEEEEEEEGKEEEEEREEEEGQGQST) are disordered. Composition is skewed to acidic residues over residues 33–43 (ADEEEEAEEEA) and 51–72 (LEEEEEEEEGKEEEEEREEEEG). A helical; Signal-anchor for type II membrane protein transmembrane segment spans residues 110-130 (LILVIYFFFYASLAAVITLFI). The Perinuclear space segment spans residues 131 to 356 (YMLFLAISPY…RIIFTLNIET (226 aa)).

The protein belongs to the X(+)/potassium ATPases subunit beta family. In terms of assembly, does not associate with known Na,K-ATPase alpha-subunits. Associates with a SMAD7-transcriptional complex. Interacts with SNW1 and TOR1AIP1. Expressed in perinatal myocytes (at protein level). Expressed during postnatal development in skeletal muscle and heart.

It localises to the nucleus inner membrane. Functionally, may act as a transcriptional coregulator during muscle development through its interaction with SNW1. Has lost its ancestral function as a Na,K-ATPase beta-subunit. The chain is Protein ATP1B4 (Atp1b4) from Rattus norvegicus (Rat).